The chain runs to 218 residues: Probable septum site-determining protein MinC (218 aa).

It belongs to the MinC family. As to quaternary structure, interacts with MinD and FtsZ.

In terms of biological role, cell division inhibitor that blocks the formation of polar Z ring septums. Rapidly oscillates between the poles of the cell to destabilize FtsZ filaments that have formed before they mature into polar Z rings. Prevents FtsZ polymerization. This Moorella thermoacetica (strain ATCC 39073 / JCM 9320) protein is Probable septum site-determining protein MinC.